A 949-amino-acid chain; its full sequence is Bifunctional uridylyltransferase/uridylyl-removing enzyme (949 aa).

The tract at residues 1 to 377 (MARHETSFPE…RFRNRVRKIP (377 aa)) is uridylyltransferase. Residues 378 to 733 (GTLDFVDDGG…VRTHDFHAIT (356 aa)) form a uridylyl-removing region. Residues 494-610 (VDEHLLRAVD…VDFAERVQSL (117 aa)) form the HD domain. ACT domains lie at 734 to 815 (EITV…DVIA) and 845 to 926 (VIEV…ERMP). Residues 925–949 (MPSGIIAPTPVPRASHGSKATKAET) are disordered.

This sequence belongs to the GlnD family. It depends on Mg(2+) as a cofactor.

The catalysed reaction is [protein-PII]-L-tyrosine + UTP = [protein-PII]-uridylyl-L-tyrosine + diphosphate. It carries out the reaction [protein-PII]-uridylyl-L-tyrosine + H2O = [protein-PII]-L-tyrosine + UMP + H(+). Its activity is regulated as follows. Uridylyltransferase (UTase) activity is inhibited by glutamine, while glutamine activates uridylyl-removing (UR) activity. In terms of biological role, modifies, by uridylylation and deuridylylation, the PII regulatory proteins (GlnB and homologs), in response to the nitrogen status of the cell that GlnD senses through the glutamine level. Under low glutamine levels, catalyzes the conversion of the PII proteins and UTP to PII-UMP and PPi, while under higher glutamine levels, GlnD hydrolyzes PII-UMP to PII and UMP (deuridylylation). Thus, controls uridylylation state and activity of the PII proteins, and plays an important role in the regulation of nitrogen fixation and metabolism. This chain is Bifunctional uridylyltransferase/uridylyl-removing enzyme, found in Sinorhizobium medicae (strain WSM419) (Ensifer medicae).